Reading from the N-terminus, the 886-residue chain is Microsomal triglyceride transfer protein (886 aa).

An N-terminal signal peptide occupies residues 1-24 (MLRLAGLLLCVTSFLSTSSLGANA). One can recognise a Vitellogenin domain in the interval 28 to 662 (LDNDRLYRYS…QSNNALLHGL (635 aa)). Cystine bridges form between C174–C194 and C440–C445.

In terms of assembly, heterodimer; heterodimerizes with the protein disulfide isomerase. Interacts with apolipoprotein B.

It is found in the endoplasmic reticulum. In terms of biological role, catalyzes the transport of triglyceride, cholesteryl ester, and phospholipid between phospholipid surfaces. Required for the secretion of plasma lipoproteins that contain apolipoprotein B. The protein is Microsomal triglyceride transfer protein of Megalobrama amblycephala (Chinese blunt snout bream).